The following is a 388-amino-acid chain: Cytochrome b (388 aa).

The next 4 membrane-spanning stretches (helical) occupy residues 32–52 (FGSL…TLAM), 76–98 (WLIR…LHVG), 113–133 (TWTI…LGYV), and 179–199 (FFAL…MHLI). Residues His-82 and His-96 each coordinate heme b. The heme b site is built by His-183 and His-197. His-202 contacts a ubiquinone. The next 4 helical transmembrane spans lie at 226-246 (FIFK…IFIF), 290-310 (LLGV…PITD), 322-342 (LSKI…QLGA), and 349-369 (FIEF…IIVP).

It belongs to the cytochrome b family. In terms of assembly, fungal cytochrome b-c1 complex contains 10 subunits; 3 respiratory subunits, 2 core proteins and 5 low-molecular weight proteins. Cytochrome b-c1 complex is a homodimer. Requires heme b as cofactor.

Its subcellular location is the mitochondrion inner membrane. Its function is as follows. Component of the ubiquinol-cytochrome c reductase complex (complex III or cytochrome b-c1 complex) that is part of the mitochondrial respiratory chain. The b-c1 complex mediates electron transfer from ubiquinol to cytochrome c. Contributes to the generation of a proton gradient across the mitochondrial membrane that is then used for ATP synthesis. This chain is Cytochrome b (cob), found in Zymoseptoria tritici (Speckled leaf blotch fungus).